The primary structure comprises 207 residues: Large ribosomal subunit protein bL25 (207 aa).

The disordered stretch occupies residues 171–207 (EEETVVTVSAPRAEEEPTTTEAPEPEAVHGNDEEPVE). Over residues 196–207 (EAVHGNDEEPVE) the composition is skewed to basic and acidic residues.

Belongs to the bacterial ribosomal protein bL25 family. CTC subfamily. As to quaternary structure, part of the 50S ribosomal subunit; part of the 5S rRNA/L5/L18/L25 subcomplex. Contacts the 5S rRNA. Binds to the 5S rRNA independently of L5 and L18.

This is one of the proteins that binds to the 5S RNA in the ribosome where it forms part of the central protuberance. The chain is Large ribosomal subunit protein bL25 from Listeria innocua serovar 6a (strain ATCC BAA-680 / CLIP 11262).